The following is a 150-amino-acid chain: Large ribosomal subunit protein bL9 (150 aa).

This sequence belongs to the bacterial ribosomal protein bL9 family.

In terms of biological role, binds to the 23S rRNA. This Leuconostoc citreum (strain KM20) protein is Large ribosomal subunit protein bL9.